Here is a 458-residue protein sequence, read N- to C-terminus: Bifunctional protein GlmU (458 aa).

Residues M1–R229 are pyrophosphorylase. Residues L8–G11, K22, Q72, and G77–T78 contribute to the UDP-N-acetyl-alpha-D-glucosamine site. Residue D102 coordinates Mg(2+). UDP-N-acetyl-alpha-D-glucosamine-binding residues include G139, E154, N169, and N227. N227 is a Mg(2+) binding site. The tract at residues V230–N250 is linker. An N-acetyltransferase region spans residues G251–Q458. R332 and K350 together coordinate UDP-N-acetyl-alpha-D-glucosamine. The active-site Proton acceptor is H362. The UDP-N-acetyl-alpha-D-glucosamine site is built by Y365 and N376. Residues A379, S404, A422, and R439 each coordinate acetyl-CoA.

In the N-terminal section; belongs to the N-acetylglucosamine-1-phosphate uridyltransferase family. It in the C-terminal section; belongs to the transferase hexapeptide repeat family. In terms of assembly, homotrimer. It depends on Mg(2+) as a cofactor.

It localises to the cytoplasm. It catalyses the reaction alpha-D-glucosamine 1-phosphate + acetyl-CoA = N-acetyl-alpha-D-glucosamine 1-phosphate + CoA + H(+). The catalysed reaction is N-acetyl-alpha-D-glucosamine 1-phosphate + UTP + H(+) = UDP-N-acetyl-alpha-D-glucosamine + diphosphate. It functions in the pathway nucleotide-sugar biosynthesis; UDP-N-acetyl-alpha-D-glucosamine biosynthesis; N-acetyl-alpha-D-glucosamine 1-phosphate from alpha-D-glucosamine 6-phosphate (route II): step 2/2. The protein operates within nucleotide-sugar biosynthesis; UDP-N-acetyl-alpha-D-glucosamine biosynthesis; UDP-N-acetyl-alpha-D-glucosamine from N-acetyl-alpha-D-glucosamine 1-phosphate: step 1/1. Its pathway is bacterial outer membrane biogenesis; LPS lipid A biosynthesis. Functionally, catalyzes the last two sequential reactions in the de novo biosynthetic pathway for UDP-N-acetylglucosamine (UDP-GlcNAc). The C-terminal domain catalyzes the transfer of acetyl group from acetyl coenzyme A to glucosamine-1-phosphate (GlcN-1-P) to produce N-acetylglucosamine-1-phosphate (GlcNAc-1-P), which is converted into UDP-GlcNAc by the transfer of uridine 5-monophosphate (from uridine 5-triphosphate), a reaction catalyzed by the N-terminal domain. This Lactococcus lactis subsp. cremoris (strain SK11) protein is Bifunctional protein GlmU.